Reading from the N-terminus, the 197-residue chain is Peptide deformylase (197 aa).

Residues Cys-106 and His-148 each contribute to the Fe cation site. Residue Glu-149 is part of the active site. His-152 contributes to the Fe cation binding site.

Belongs to the polypeptide deformylase family. It depends on Fe(2+) as a cofactor.

It catalyses the reaction N-terminal N-formyl-L-methionyl-[peptide] + H2O = N-terminal L-methionyl-[peptide] + formate. Removes the formyl group from the N-terminal Met of newly synthesized proteins. Requires at least a dipeptide for an efficient rate of reaction. N-terminal L-methionine is a prerequisite for activity but the enzyme has broad specificity at other positions. This Mycobacterium sp. (strain JLS) protein is Peptide deformylase.